The following is a 178-amino-acid chain: Plasmid transfer protein TraF (178 aa).

The N-terminal stretch at 1-30 is a signal peptide; sequence MSRILKRIAAGVVIAGVAALLLAAGGYAAG.

The protein belongs to the peptidase S26C family.

It is found in the periplasm. Required for donor-specific phage sensitivity. May be involved in pilus assembly. This chain is Plasmid transfer protein TraF (traF), found in Escherichia coli.